The sequence spans 232 residues: Noggin (232 aa).

A signal peptide spans 1–27 (MERCPSLGVTLYALVVVLGLRAAPAGG). The N-linked (GlcNAc...) asparagine glycan is linked to asparagine 62. A disordered region spans residues 77–99 (GFMATSPPEDRPGGGGGPAGGAE). Cystine bridges form between cysteine 155–cysteine 192, cysteine 178–cysteine 228, cysteine 184–cysteine 230, and cysteine 207–cysteine 215.

It belongs to the noggin family. In terms of assembly, homodimer. Interacts with GDF5; inhibits chondrocyte differentiation. As to expression, expressed in condensing cartilage and immature chondrocytes.

The protein resides in the secreted. Essential for cartilage morphogenesis and joint formation. Inhibitor of bone morphogenetic proteins (BMP) signaling which is required for growth and patterning of the neural tube and somite. Inhibits chondrocyte differentiation through its interaction with GDF5 and, probably, GDF6. This Mus musculus (Mouse) protein is Noggin (Nog).